Consider the following 144-residue polypeptide: Protein archease (144 aa).

Residues aspartate 14, aspartate 143, and isoleucine 144 each contribute to the Ca(2+) site.

It belongs to the archease family.

In terms of biological role, activates the tRNA-splicing ligase complex by facilitating the enzymatic turnover of catalytic subunit RtcB. Acts by promoting the guanylylation of RtcB, a key intermediate step in tRNA ligation. Can also alter the NTP specificity of RtcB such that ATP, dGTP or ITP is used efficiently. The sequence is that of Protein archease from Aeropyrum pernix (strain ATCC 700893 / DSM 11879 / JCM 9820 / NBRC 100138 / K1).